The following is a 314-amino-acid chain: GMP synthase [glutamine-hydrolyzing] subunit B (314 aa).

Residues 2–186 form the GMPS ATP-PPase domain; sequence FDPKKFVEEA…LGIPDEIVER (185 aa). Residue 29 to 35 participates in ATP binding; it reads SGGVDST.

In terms of assembly, heterodimer composed of a glutamine amidotransferase subunit (A) and a GMP-binding subunit (B).

It catalyses the reaction XMP + L-glutamine + ATP + H2O = GMP + L-glutamate + AMP + diphosphate + 2 H(+). It functions in the pathway purine metabolism; GMP biosynthesis; GMP from XMP (L-Gln route): step 1/1. Its function is as follows. Catalyzes the synthesis of GMP from XMP. The protein is GMP synthase [glutamine-hydrolyzing] subunit B (guaAB) of Methanopyrus kandleri (strain AV19 / DSM 6324 / JCM 9639 / NBRC 100938).